Consider the following 376-residue polypeptide: Penicillin V acylase (376 aa).

The first 29 residues, 1–29, serve as a signal peptide directing secretion; the sequence is MIKNNKRIKSTVCALSLVALTLGSAVSLA. The Nucleophile role is filled by C30.

The protein belongs to the peptidase C59 family. In terms of assembly, homotetramer. Dimer of dimers.

The protein resides in the periplasm. The catalysed reaction is a penicillin + H2O = 6-aminopenicillanate + a carboxylate. Exhibits uncharacteristic kinetic behavior, showing positive cooperativity coupled with substrate inhibition. Penicillin acylase activity is enhanced in the presence of the reducing agent DTT, indicating active sulfhydryl group in the enzyme. Also shows enhanced activity in presence of organic solvents and detergents. Inhibited largely in presence of Ag(+), Hg(2+) and Cd(2+) ions, which have strong affinities for sulfhydryl groups. Activity is also inhibited by bile salts. Its function is as follows. Catalyzes the hydrolysis of penicillin V to 6-aminopenicillanate (6-APA). Shows high specificity towards penicillin V. Can use other beta-lactam substrates, including penicillin G, ampicillin, cephalexin, cloxacillin and dicloxacillin, but at a rate less than 10% of that of penicillin V. Does not show any activity with glyco- or tauro-conjugated bile salts. The polypeptide is Penicillin V acylase (Pectobacterium atrosepticum (strain SCRI 1043 / ATCC BAA-672) (Erwinia carotovora subsp. atroseptica)).